The primary structure comprises 329 residues: Vomeronasal type-1 receptor 42 (329 aa).

Residues 1-32 lie on the Extracellular side of the membrane; that stretch reads MGDILFSSPQSMFSHTMNKNSILHTHSIIGKT. The helical transmembrane segment at 33–53 threads the bilayer; the sequence is FFSEIGIGISGNSFLLLVHIL. Residues 54–65 are Cytoplasmic-facing; sequence KFIRGHRPRLTD. Residues 66–86 form a helical membrane-spanning segment; the sequence is LPIGLLSLIHLLMLLVAAFIA. At 87-109 the chain is on the extracellular side; the sequence is TDIFISRRGWDDIICKFLVYLYR. A disulfide bond links C101 and C188. Residues 110–130 traverse the membrane as a helical segment; it reads VLRGFSLCTTSMLSILQAIIL. The Cytoplasmic segment spans residues 131–150; it reads SPRSSCLAKFKHISPHHISG. The helical transmembrane segment at 151 to 171 threads the bilayer; it reads AILFLSVLYMLIGSQLLVSII. Over 172–209 the chain is Extracellular; sequence ATPNLTMNDFIYVTQSCSILPLSYLMQSIYSTLLAIRE. Residue N175 is glycosylated (N-linked (GlcNAc...) asparagine). The helical transmembrane segment at 210–230 threads the bilayer; that stretch reads FFLISLMVLSNWYMVALLSMH. The Cytoplasmic portion of the chain corresponds to 231–254; the sequence is RKQTQHLHGTNLSPKKSPEQSATQ. A helical membrane pass occupies residues 255 to 275; sequence TILMLISFFLLMTIYDTIVSC. The Extracellular portion of the chain corresponds to 276-285; sequence SRTMFLNDPT. The helical transmembrane segment at 286-306 threads the bilayer; it reads SYSIELFIMHIYATVSPFVFM. Over 307–329 the chain is Cytoplasmic; sequence STEKHIVNFLRSLGKRVINFNLH.

The protein belongs to the G-protein coupled receptor 1 family.

Its subcellular location is the cell membrane. Functionally, putative pheromone receptor implicated in the regulation of social and reproductive behavior. This chain is Vomeronasal type-1 receptor 42 (Vmn1r42), found in Mus musculus (Mouse).